Here is a 462-residue protein sequence, read N- to C-terminus: UDP-N-acetylmuramoylalanine--D-glutamate ligase (462 aa).

Position 120–126 (120–126 (GTNGKTT)) interacts with ATP.

The protein belongs to the MurCDEF family.

The protein localises to the cytoplasm. The catalysed reaction is UDP-N-acetyl-alpha-D-muramoyl-L-alanine + D-glutamate + ATP = UDP-N-acetyl-alpha-D-muramoyl-L-alanyl-D-glutamate + ADP + phosphate + H(+). The protein operates within cell wall biogenesis; peptidoglycan biosynthesis. Functionally, cell wall formation. Catalyzes the addition of glutamate to the nucleotide precursor UDP-N-acetylmuramoyl-L-alanine (UMA). This chain is UDP-N-acetylmuramoylalanine--D-glutamate ligase, found in Bdellovibrio bacteriovorus (strain ATCC 15356 / DSM 50701 / NCIMB 9529 / HD100).